A 247-amino-acid chain; its full sequence is 5'-nucleotidase SurE (247 aa).

4 residues coordinate a divalent metal cation: D8, D9, S39, and N91.

The protein belongs to the SurE nucleotidase family. The cofactor is a divalent metal cation.

It localises to the cytoplasm. The enzyme catalyses a ribonucleoside 5'-phosphate + H2O = a ribonucleoside + phosphate. Functionally, nucleotidase that shows phosphatase activity on nucleoside 5'-monophosphates. The sequence is that of 5'-nucleotidase SurE from Aromatoleum aromaticum (strain DSM 19018 / LMG 30748 / EbN1) (Azoarcus sp. (strain EbN1)).